Consider the following 335-residue polypeptide: Protein FATTY ACID EXPORT 3, chloroplastic (335 aa).

The N-terminal 72 residues, 1 to 72, are a transit peptide targeting the chloroplast; sequence MMSIPMELMS…PEVLLNRSVV (72 aa). Positions 82–101 are disordered; it reads GESGVEVGKEKSDIDVEDDT. Over residues 88–101 the composition is skewed to basic and acidic residues; it reads VGKEKSDIDVEDDT. Positions 101-160 form a coiled coil; sequence TSKEAWKQTLESFKEQVSKMQSVSSEAYSVNSQKAMTVLKETSEQLRIQAEKAKEELGTK. A run of 3 helical transmembrane segments spans residues 205–225, 228–248, and 286–306; these read FHVGIPYGLLLLVGGFINFMV, SIPAIRFGVILGGALFALSLA, and STFLGFFTTLTSGGVLGFYLY. The segment at 316–335 is disordered; it reads PTLEDGGEDESSDGFVRSEG.

This sequence belongs to the TMEM14 family.

The protein resides in the plastid. It is found in the chloroplast membrane. Functionally, may be involved in free fatty acids export from the plastids. In Arabidopsis thaliana (Mouse-ear cress), this protein is Protein FATTY ACID EXPORT 3, chloroplastic.